Consider the following 212-residue polypeptide: Small ribosomal subunit protein uS19m (212 aa).

The N-terminal 29 residues, 1–29, are a transit peptide targeting the mitochondrion; that stretch reads MAFCTKLGGHWKQGVNVPVSSMLGSLRYM. The 79-residue stretch at 31 to 109 folds into the RRM domain; it reads TKLYIGGLSP…FNISVNVAKD (79 aa).

Belongs to the universal ribosomal protein uS19 family. As to quaternary structure, component of the mitochondrial ribosome small subunit.

Its subcellular location is the mitochondrion. The RNA-binding domain found in RPS19 may functionally replace the missing mitochondrial RPS13. The sequence is that of Small ribosomal subunit protein uS19m (RPS19) from Arabidopsis thaliana (Mouse-ear cress).